The sequence spans 243 residues: tRNA (guanine-N(1)-)-methyltransferase (243 aa).

S-adenosyl-L-methionine is bound by residues Gly-113 and 133–138 (IGDFVL).

This sequence belongs to the RNA methyltransferase TrmD family. Homodimer.

It is found in the cytoplasm. It catalyses the reaction guanosine(37) in tRNA + S-adenosyl-L-methionine = N(1)-methylguanosine(37) in tRNA + S-adenosyl-L-homocysteine + H(+). Specifically methylates guanosine-37 in various tRNAs. In Bacillus velezensis (strain DSM 23117 / BGSC 10A6 / LMG 26770 / FZB42) (Bacillus amyloliquefaciens subsp. plantarum), this protein is tRNA (guanine-N(1)-)-methyltransferase.